The primary structure comprises 780 residues: Acetyl-CoA decarbonylase/synthase complex subunit alpha (780 aa).

6 residues coordinate [4Fe-4S] cluster: cysteine 73, cysteine 76, cysteine 77, cysteine 79, cysteine 84, and cysteine 93. A CO-binding site is contributed by histidine 116. 3 residues coordinate [Ni-4Fe-4S] cluster: histidine 250, cysteine 278, and cysteine 317. 2 consecutive 4Fe-4S ferredoxin-type domains span residues 399–429 (IDEI…MDAV) and 440–469 (LEEM…VSMV). [4Fe-4S] cluster-binding residues include cysteine 409, cysteine 412, cysteine 415, cysteine 419, cysteine 449, cysteine 452, cysteine 455, and cysteine 459. Cysteine 517, cysteine 546, and cysteine 581 together coordinate [Ni-4Fe-4S] cluster.

The protein belongs to the Ni-containing carbon monoxide dehydrogenase family. Heterotetramer of two alpha and two epsilon subunits. The ACDS complex is made up of alpha, epsilon, beta, gamma and delta subunits with a probable stoichiometry of (alpha(2)epsilon(2))(4)-beta(8)-(gamma(1)delta(1))(8). The cofactor is [4Fe-4S] cluster. [Ni-4Fe-4S] cluster is required as a cofactor.

It catalyses the reaction CO + 2 oxidized [2Fe-2S]-[ferredoxin] + H2O = 2 reduced [2Fe-2S]-[ferredoxin] + CO2 + 2 H(+). In terms of biological role, part of the ACDS complex that catalyzes the reversible cleavage of acetyl-CoA, allowing autotrophic growth from CO(2). The alpha-epsilon subcomponent functions as a carbon monoxide dehydrogenase. The polypeptide is Acetyl-CoA decarbonylase/synthase complex subunit alpha (Methanothermobacter thermautotrophicus (strain ATCC 29096 / DSM 1053 / JCM 10044 / NBRC 100330 / Delta H) (Methanobacterium thermoautotrophicum)).